We begin with the raw amino-acid sequence, 799 residues long: Transcriptional activator FLO8 (799 aa).

Residues 1-10 are compositionally biased toward polar residues; sequence MSYKVNSSYP. Disordered stretches follow at residues 1–20, 37–68, 101–127, 255–406, 431–503, 568–622, 644–691, and 705–758; these read MSYKVNSSYPDSIPPTEQPY, TNSEQQRQQQQQQQQQQQQWINQPTAENSDLK, AHLDRDKGQNPVDGPKSKENNGNQNTF, TTGA…RVNK, NSKS…SVIL, ESGK…PHGF, VSQE…YDFD, and AYAS…NENQ. Residues 41–55 show a composition bias toward low complexity; sequence QQRQQQQQQQQQQQQ. The LisH domain occupies 73 to 105; it reads CKNTLNEYIFDFLTKSSLKNTAAAFAQDAHLDR. Residues 270–285 show a composition bias toward polar residues; that stretch reads DFTNVGPTQNRSQNVT. Over residues 307–317 the composition is skewed to low complexity; the sequence is NNNTTNNTTNN. A compositionally biased stretch (polar residues) spans 318–340; it reads KSPVNQPKSLKTMHSTDKPNNVP. Residues 341–353 show a composition bias toward low complexity; it reads TSKSTRSRSATSK. Residues 354-370 are compositionally biased toward basic residues; it reads AKGKVKAGLVAKRRRKN. 2 stretches are compositionally biased toward polar residues: residues 371 to 396 and 460 to 480; these read NTATVSAGSTNACSPNITTPGSTTSE and KASTSAFPVESTNKLGGNSVV. Residues 482 to 497 show a composition bias toward basic residues; the sequence is GKKRSPPNTRVSRRKS. Composition is skewed to polar residues over residues 584 to 593 and 660 to 675; these read SKVSASSPLS and GNDSRSSKGNRNTLST.

This sequence belongs to the FLO8 family.

The protein localises to the nucleus. Required for diploid filamentous growth, haploid invasive growth and flocculation. Putative transcriptional activator of FLO1. This chain is Transcriptional activator FLO8 (FLO8), found in Saccharomyces cerevisiae (strain ATCC 204508 / S288c) (Baker's yeast).